Reading from the N-terminus, the 199-residue chain is GTP cyclohydrolase-2 (199 aa).

49 to 53 (RIHSE) serves as a coordination point for GTP. The Zn(2+) site is built by C54, C65, and C67. GTP is bound by residues Q70, 92 to 94 (EGR), and T114. The active-site Proton acceptor is the D126. R128 functions as the Nucleophile in the catalytic mechanism. GTP is bound by residues T149 and K154.

This sequence belongs to the GTP cyclohydrolase II family. Homodimer. Zn(2+) is required as a cofactor.

It catalyses the reaction GTP + 4 H2O = 2,5-diamino-6-hydroxy-4-(5-phosphoribosylamino)-pyrimidine + formate + 2 phosphate + 3 H(+). Its pathway is cofactor biosynthesis; riboflavin biosynthesis; 5-amino-6-(D-ribitylamino)uracil from GTP: step 1/4. Catalyzes the conversion of GTP to 2,5-diamino-6-ribosylamino-4(3H)-pyrimidinone 5'-phosphate (DARP), formate and pyrophosphate. The protein is GTP cyclohydrolase-2 of Blochmanniella floridana.